The primary structure comprises 336 residues: Serpentine receptor class gamma-13 (336 aa).

8 helical membrane-spanning segments follow: residues 32 to 52 (LKYIIQVTLLSINFILNFLII), 68 to 88 (FFIIYAADLIMGMYMSLSEIL), 93 to 113 (FIYVTLLCPILAPYFFTPSIF), 133 to 153 (VFLSFNRMTCVVFPVGYSAIW), 156 to 176 (ILTPIIIVLFVLPIGIIWNVL), 210 to 230 (FIVSLILIIVISGVTLYALLI), 246 to 266 (TMVLSLEFSFLSVIQIYFAFF), and 277 to 297 (LLRVMYFTYDLLNFSTTIIFI).

Belongs to the nematode receptor-like protein srg family.

The protein localises to the membrane. The polypeptide is Serpentine receptor class gamma-13 (srg-13) (Caenorhabditis elegans).